The following is a 343-amino-acid chain: RNA 3'-terminal phosphate cyclase (343 aa).

ATP-binding positions include Gln-102 and 284 to 288 (FLGDQ). Catalysis depends on His-308, which acts as the Tele-AMP-histidine intermediate.

Belongs to the RNA 3'-terminal cyclase family. Type 1 subfamily.

Its subcellular location is the cytoplasm. It catalyses the reaction a 3'-end 3'-phospho-ribonucleotide-RNA + ATP = a 3'-end 2',3'-cyclophospho-ribonucleotide-RNA + AMP + diphosphate. Functionally, catalyzes the conversion of 3'-phosphate to a 2',3'-cyclic phosphodiester at the end of RNA. The mechanism of action of the enzyme occurs in 3 steps: (A) adenylation of the enzyme by ATP; (B) transfer of adenylate to an RNA-N3'P to produce RNA-N3'PP5'A; (C) and attack of the adjacent 2'-hydroxyl on the 3'-phosphorus in the diester linkage to produce the cyclic end product. The biological role of this enzyme is unknown but it is likely to function in some aspects of cellular RNA processing. This Thermococcus kodakarensis (strain ATCC BAA-918 / JCM 12380 / KOD1) (Pyrococcus kodakaraensis (strain KOD1)) protein is RNA 3'-terminal phosphate cyclase (rtcA).